Here is a 204-residue protein sequence, read N- to C-terminus: Peroxynitrite isomerase (204 aa).

The short motif at 21–27 (GEWEGSG) is the GXWXGXG element. Histidine 195 serves as a coordination point for heme b.

This sequence belongs to the nitrobindin family. Homodimer. The cofactor is heme b.

It carries out the reaction peroxynitrite = nitrate. Its pathway is nitrogen metabolism. In terms of biological role, heme-binding protein able to scavenge peroxynitrite and to protect free L-tyrosine against peroxynitrite-mediated nitration, by acting as a peroxynitrite isomerase that converts peroxynitrite to nitrate. Therefore, this protein likely plays a role in peroxynitrite sensing and in the detoxification of reactive nitrogen and oxygen species (RNS and ROS, respectively). Is able to bind nitric oxide (NO) in vitro, but may act as a sensor of peroxynitrite levels in vivo. The sequence is that of Peroxynitrite isomerase from Arthrobacter sp. (strain FB24).